The chain runs to 655 residues: Threonine--tRNA ligase (655 aa).

A TGS domain is found at 1–66; it reads MIDLVFPDGS…TGERKFEILT (66 aa). The segment at 248–540 is catalytic; that stretch reads DHRKLGKTMD…LLENFAGALP (293 aa). Positions 340, 391, and 517 each coordinate Zn(2+).

It belongs to the class-II aminoacyl-tRNA synthetase family. In terms of assembly, homodimer. Zn(2+) serves as cofactor.

Its subcellular location is the cytoplasm. The enzyme catalyses tRNA(Thr) + L-threonine + ATP = L-threonyl-tRNA(Thr) + AMP + diphosphate + H(+). In terms of biological role, catalyzes the attachment of threonine to tRNA(Thr) in a two-step reaction: L-threonine is first activated by ATP to form Thr-AMP and then transferred to the acceptor end of tRNA(Thr). Also edits incorrectly charged L-seryl-tRNA(Thr). In Caulobacter vibrioides (strain ATCC 19089 / CIP 103742 / CB 15) (Caulobacter crescentus), this protein is Threonine--tRNA ligase.